Here is a 346-residue protein sequence, read N- to C-terminus: MLFKQQAWLRQKLLVLGSLAVGSLLYLVARVGSLDRLQPICPIEGRLGGARTQAEFPLRALQFKRGLLHEFRKGNASKEQVRLHDLVQQLPKAIIIGVRKGGTRALLEMLNLHPAVVKASQEIHFFDNDENYGKGIEWYRKKMPFSYPQQITIEKSPAYFITEEVPERIYKMNSSIKLLIIVREPTTRAISDYTQVLEGKERKNKTYYKFEKLAIDPNTCEVNTKYKAVRTSIYTKHLERWLKYFPIEQFHVVDGDRLITEPLPELQLVEKFLNLPPRISQYNLYFNATRGFYCLRFNIIFNKCLAGSKGRIHPEVDPSVITKLRKFFHPFNQKFYQITGRTLNWP.

Over 1–12 the chain is Cytoplasmic; sequence MLFKQQAWLRQK. The helical; Signal-anchor for type II membrane protein transmembrane segment at 13–32 threads the bilayer; the sequence is LLVLGSLAVGSLLYLVARVG. Topologically, residues 33–346 are lumenal; it reads SLDRLQPICP…QITGRTLNWP (314 aa). Residue 100 to 104 coordinates 3'-phosphoadenylyl sulfate; that stretch reads KGGTR. Residues 122 to 128 and 155 to 158 contribute to the substrate site; these read EIHFFDN and KSPA. 2 residues coordinate 3'-phosphoadenylyl sulfate: R183 and S191. 226-227 lines the substrate pocket; sequence YK. Residue N287 is glycosylated (N-linked (GlcNAc...) asparagine). Y293 contributes to the 3'-phosphoadenylyl sulfate binding site. C294 and C304 are joined by a disulfide. 309–313 is a binding site for 3'-phosphoadenylyl sulfate; the sequence is KGRIH.

Belongs to the sulfotransferase 1 family. Highly expressed in skeletal muscle and fetal brain, and also found in adult brain, spinal cord, cerebellum and colon.

Its subcellular location is the golgi apparatus membrane. The catalysed reaction is alpha-D-glucosaminyl-[heparan sulfate](n) + 3'-phosphoadenylyl sulfate = 3-sulfo-alpha-D-glucosaminyl-[heparan sulfate](n) + adenosine 3',5'-bisphosphate + H(+). Functionally, sulfotransferase that utilizes 3'-phospho-5'-adenylyl sulfate (PAPS) to catalyze the transfer of a sulfo group to position 3 of glucosamine residues in heparan. Catalyzes the rate limiting step in the biosynthesis of heparan sulfate (HSact). This modification is a crucial step in the biosynthesis of anticoagulant heparan sulfate as it completes the structure of the antithrombin pentasaccharide binding site. Also generates GlcUA-GlcNS or IdoUA-GlcNS and IdoUA2S-GlcNH2. The substrate-specific O-sulfation generates an enzyme-modified heparan sulfate which acts as a binding receptor to Herpes simplex virus-1 (HSV-1) and permits its entry. The protein is Heparan sulfate glucosamine 3-O-sulfotransferase 5 (HS3ST5) of Homo sapiens (Human).